The primary structure comprises 102 residues: Small ribosomal subunit protein uS10 (102 aa).

It belongs to the universal ribosomal protein uS10 family. As to quaternary structure, part of the 30S ribosomal subunit.

Its function is as follows. Involved in the binding of tRNA to the ribosomes. The sequence is that of Small ribosomal subunit protein uS10 from Exiguobacterium sibiricum (strain DSM 17290 / CCUG 55495 / CIP 109462 / JCM 13490 / 255-15).